Here is a 432-residue protein sequence, read N- to C-terminus: Serine--tRNA ligase (432 aa).

L-serine is bound at residue 237 to 239 (TSE). 268 to 270 (RSE) contacts ATP. Residue glutamate 291 coordinates L-serine. Residue 355–358 (EISS) participates in ATP binding. Serine 390 contacts L-serine.

This sequence belongs to the class-II aminoacyl-tRNA synthetase family. Type-1 seryl-tRNA synthetase subfamily. In terms of assembly, homodimer. The tRNA molecule binds across the dimer.

The protein localises to the cytoplasm. The catalysed reaction is tRNA(Ser) + L-serine + ATP = L-seryl-tRNA(Ser) + AMP + diphosphate + H(+). It catalyses the reaction tRNA(Sec) + L-serine + ATP = L-seryl-tRNA(Sec) + AMP + diphosphate + H(+). The protein operates within aminoacyl-tRNA biosynthesis; selenocysteinyl-tRNA(Sec) biosynthesis; L-seryl-tRNA(Sec) from L-serine and tRNA(Sec): step 1/1. Functionally, catalyzes the attachment of serine to tRNA(Ser). Is also able to aminoacylate tRNA(Sec) with serine, to form the misacylated tRNA L-seryl-tRNA(Sec), which will be further converted into selenocysteinyl-tRNA(Sec). This chain is Serine--tRNA ligase, found in Methylobacillus flagellatus (strain ATCC 51484 / DSM 6875 / VKM B-1610 / KT).